A 347-amino-acid polypeptide reads, in one-letter code: NADH-ubiquinone oxidoreductase chain 2 (347 aa).

Helical transmembrane passes span tryptophan 26–methionine 46, phenylalanine 60–leucine 80, serine 96–proline 116, serine 123–tyrosine 143, isoleucine 151–asparagine 171, isoleucine 178–proline 198, leucine 200–methionine 220, methionine 240–phenylalanine 260, aspartate 274–methionine 294, and leucine 325–isoleucine 345.

Belongs to the complex I subunit 2 family. In terms of assembly, core subunit of respiratory chain NADH dehydrogenase (Complex I) which is composed of 45 different subunits. Interacts with TMEM242.

It is found in the mitochondrion inner membrane. The catalysed reaction is a ubiquinone + NADH + 5 H(+)(in) = a ubiquinol + NAD(+) + 4 H(+)(out). Its function is as follows. Core subunit of the mitochondrial membrane respiratory chain NADH dehydrogenase (Complex I) which catalyzes electron transfer from NADH through the respiratory chain, using ubiquinone as an electron acceptor. Essential for the catalytic activity and assembly of complex I. The protein is NADH-ubiquinone oxidoreductase chain 2 of Dugong dugon (Dugong).